The sequence spans 338 residues: Glycerol-3-phosphate dehydrogenase [NAD(P)+] (338 aa).

The NADPH site is built by Ser14, Phe15, Arg35, and Lys109. 2 residues coordinate sn-glycerol 3-phosphate: Lys109 and Gly137. NADPH is bound at residue Ala141. 5 residues coordinate sn-glycerol 3-phosphate: Lys192, Asp247, Ser257, Arg258, and Asn259. Lys192 serves as the catalytic Proton acceptor. An NADPH-binding site is contributed by Arg258. The NADPH site is built by Leu282 and Glu284.

This sequence belongs to the NAD-dependent glycerol-3-phosphate dehydrogenase family.

It localises to the cytoplasm. The catalysed reaction is sn-glycerol 3-phosphate + NAD(+) = dihydroxyacetone phosphate + NADH + H(+). The enzyme catalyses sn-glycerol 3-phosphate + NADP(+) = dihydroxyacetone phosphate + NADPH + H(+). The protein operates within membrane lipid metabolism; glycerophospholipid metabolism. In terms of biological role, catalyzes the reduction of the glycolytic intermediate dihydroxyacetone phosphate (DHAP) to sn-glycerol 3-phosphate (G3P), the key precursor for phospholipid synthesis. In Rickettsia rickettsii (strain Iowa), this protein is Glycerol-3-phosphate dehydrogenase [NAD(P)+].